We begin with the raw amino-acid sequence, 110 residues long: Defensin-like protein 296 (110 aa).

An N-terminal signal peptide occupies residues 1–28 (MASKITIFFVLALVVVCTMMVCIPTATA). 6 cysteine pairs are disulfide-bonded: cysteine 34/cysteine 52, cysteine 40/cysteine 57, cysteine 45/cysteine 59, cysteine 81/cysteine 102, cysteine 87/cysteine 107, and cysteine 95/cysteine 109.

Belongs to the DEFL family.

The protein localises to the secreted. This Arabidopsis thaliana (Mouse-ear cress) protein is Defensin-like protein 296.